Reading from the N-terminus, the 508-residue chain is Putative inorganic phosphate transporter 1-13 (508 aa).

At Met1–His22 the chain is on the cytoplasmic side. Residues Phe23–Ile43 traverse the membrane as a helical segment. Over Ser44–His64 the chain is Extracellular. A helical transmembrane segment spans residues Ala65–Leu85. Over Gly86–Arg93 the chain is Cytoplasmic. The chain crosses the membrane as a helical span at residues Val94–Ser114. The Extracellular portion of the chain corresponds to Lys115–Glu117. A helical transmembrane segment spans residues Gly118–Gly138. Residues Asp139–Phe159 are Cytoplasmic-facing. The helical transmembrane segment at Ile160–Ile180 threads the bilayer. The Extracellular portion of the chain corresponds to Val181 to Lys192. The chain crosses the membrane as a helical span at residues Ile193 to His213. Topologically, residues Trp214–His277 are cytoplasmic. The chain crosses the membrane as a helical span at residues Leu278–Phe298. Topologically, residues Met299–Ala328 are extracellular. Residues Val329–Val349 form a helical membrane-spanning segment. Topologically, residues Asp350–Arg354 are cytoplasmic. A helical membrane pass occupies residues Val355–Pro375. Over Tyr376–Ala389 the chain is Extracellular. A helical transmembrane segment spans residues Val390 to Ile410. At Pro411–His424 the chain is on the cytoplasmic side. A helical transmembrane segment spans residues Gly425–Thr445. Topologically, residues Glu446–Arg450 are extracellular. The chain crosses the membrane as a helical span at residues Ile451–Pro471. Residues Glu472 to Leu508 lie on the Cytoplasmic side of the membrane.

This sequence belongs to the major facilitator superfamily. Phosphate:H(+) symporter (TC 2.A.1.9) family.

It is found in the membrane. High-affinity transporter for external inorganic phosphate. The polypeptide is Putative inorganic phosphate transporter 1-13 (PHT1-13) (Oryza sativa subsp. japonica (Rice)).